Reading from the N-terminus, the 470-residue chain is Nuclear receptor ROR-beta (470 aa).

Positions 18–93 (VIPCKICGDK…LGMSRDAVKF (76 aa)) form a DNA-binding region, nuclear receptor. NR C4-type zinc fingers lie at residues 21-41 (CKIC…CEGC) and 57-81 (CPRQ…LQKC). Residues 104-117 (LYAEVQKHQQRLQE) are compositionally biased toward basic and acidic residues. Residues 104–127 (LYAEVQKHQQRLQEQRQQQSGEAE) form a disordered region. Residues 222 to 460 (EIDRIAQNII…TLFPPLYKEL (239 aa)) enclose the NR LBD domain. The AF-2 signature appears at 456-461 (LYKELF).

This sequence belongs to the nuclear hormone receptor family. NR1 subfamily. As to quaternary structure, monomer. Interacts with CRX.

The protein resides in the nucleus. It is found in the nucleoplasm. In terms of biological role, nuclear receptor that binds DNA as a monomer to ROR response elements (RORE) containing a single core motif half-site 5'-AGGTCA-3' preceded by a short A-T-rich sequence. Considered to have intrinsic transcriptional activity, have some natural ligands such as all-trans retinoic acid (ATRA) and other retinoids which act as inverse agonists repressing the transcriptional activity. Required for normal postnatal development of rod and cone photoreceptor cells. Modulates rod photoreceptors differentiation at least by inducing the transcription factor NRL-mediated pathway. In cone photoreceptor cells, regulates transcription of OPN1SW. Involved in the regulation of the period length and stability of the circadian rhythm. May control cytoarchitectural patterning of neocortical neurons during development. May act in a dose-dependent manner to regulate barrel formation upon innervation of layer IV neurons by thalamocortical axons. May play a role in the suppression of osteoblastic differentiation through the inhibition of RUNX2 transcriptional activity. Functionally, isoform 1 is critical for hindlimb motor control and for the differentiation of amacrine and horizontal cells in the retina. Regulates the expression of PTF1A synergistically with FOXN4. The sequence is that of Nuclear receptor ROR-beta (RORB) from Homo sapiens (Human).